Here is a 1207-residue protein sequence, read N- to C-terminus: Protein STU1 (1207 aa).

5 disordered regions span residues 504 to 525, 549 to 730, 789 to 856, 869 to 928, and 1086 to 1105; these read EKTA…SQSS, EQRR…DEDL, AQSI…EGVQ, AVEH…LYSE, and SSTP…LPGA. Residues 576 to 594 are compositionally biased toward low complexity; that stretch reads SASTKSLSARTASTASTAS. Polar residues-rich tracts occupy residues 605-624, 653-672, and 684-710; these read SGES…SLMS, GKTT…TTKK, and AQTQ…VQKT. Composition is skewed to low complexity over residues 711-724 and 791-806; these read ASAS…APSA and SIHH…SHLS. The span at 869-878 shows a compositional bias: basic and acidic residues; the sequence is AVEHEVEKPV. Polar residues-rich tracts occupy residues 895–905 and 919–928; these read NESISSDTVMG and TSTGSVLYSE.

It belongs to the CLASP family. Interacts with microtubules.

The protein localises to the cytoplasm. The protein resides in the cytoskeleton. Its subcellular location is the nucleus. It is found in the spindle. Microtubule binding protein that promotes the stabilization of dynamic microtubules. Required for mitotic spindle formation. The chain is Protein STU1 (STU1) from Phaeosphaeria nodorum (strain SN15 / ATCC MYA-4574 / FGSC 10173) (Glume blotch fungus).